A 280-amino-acid chain; its full sequence is Divalent cation/proton antiporter GDT1 (280 aa).

Topologically, residues 1–3 (MGN) are cytoplasmic. A helical transmembrane segment spans residues 4 to 24 (MIKKASLIALLPLFTAAAAAA). The Vacuolar portion of the chain corresponds to 25-45 (TDAETSMESGSSSHLKSFLMS). The chain crosses the membrane as a helical span at residues 46-66 (VSMIGLSEIGDKTFLIAALMA). The Cytoplasmic segment spans residues 67–71 (MRHKR). Residues 72–92 (VLVFSAAATSLAIMTILSGVV) form a helical membrane-spanning segment. Topologically, residues 93–104 (GHSAVAFLSERY) are vacuolar. Residues 105-125 (TAFFAGILFLVFGYKLTMEGL) form a helical membrane-spanning segment. At 126–183 (EMSKDAGVEEEMAEVEEEIAIKDMNQDMDDVEKGGDTAYDKQLKNASIGKKIVHRIRE) the chain is on the cytoplasmic side. The chain crosses the membrane as a helical span at residues 184 to 204 (LASFMFSPVWVQIFLMVFLGE). Residues 205–222 (LGDRSQISIIAMATDSDY) lie on the Vacuolar side of the membrane. The helical transmembrane segment at 223-243 (WYVIAGAVIGHAICSGLAVVG) threads the bilayer. The Cytoplasmic portion of the chain corresponds to 244–255 (GKLLATRISIRT). The chain crosses the membrane as a helical span at residues 256-276 (ITLASSLLFFIFALMYIYQAF). Residues 277-280 (TTQD) are Vacuolar-facing.

Belongs to the GDT1 family.

It is found in the golgi apparatus. It localises to the cis-Golgi network membrane. It catalyses the reaction Ca(2+)(in) + n H(+)(out) = Ca(2+)(out) + n H(+)(in). The catalysed reaction is Mn(2+)(in) + n H(+)(out) = Mn(2+)(out) + n H(+)(in). Its function is as follows. Divalent cation:proton antiporter that exchanges calcium or manganese ions for protons across the Golgi membrane. Mediates the reversible transport of calcium or manganese to the Golgi lumen driven by the proton gradient and possibly the membrane potential generated by V-ATPase. Provides calcium or manganese cofactors to resident Golgi enzymes and contributes to the maintenance of an acidic luminal Golgi pH required for proper functioning of the secretory pathway. The transport stoichiometry remains to be elucidated. In Saccharomyces cerevisiae (strain ATCC 204508 / S288c) (Baker's yeast), this protein is Divalent cation/proton antiporter GDT1.